Reading from the N-terminus, the 474-residue chain is Cryptochrome DASH (474 aa).

The Photolyase/cryptochrome alpha/beta domain maps to 2–136 (DTAVVWFRDD…ALRQRWTHTL (135 aa)). Positions 161–171 (EAAATVRDPRS) are enriched in basic and acidic residues. The tract at residues 161-202 (EAAATVRDPRSAPETVPTPDGLTPGPVPTVESLGVSEPPTDD) is disordered.

It belongs to the DNA photolyase class-1 family. Requires FAD as cofactor. The cofactor is (6R)-5,10-methylene-5,6,7,8-tetrahydrofolate.

Functionally, may have a photoreceptor function. Binds DNA; probably functions as a transcriptional repressor. This is Cryptochrome DASH (cry) from Natronomonas pharaonis (strain ATCC 35678 / DSM 2160 / CIP 103997 / JCM 8858 / NBRC 14720 / NCIMB 2260 / Gabara) (Halobacterium pharaonis).